The primary structure comprises 106 residues: Large ribosomal subunit protein uL24 (106 aa).

Belongs to the universal ribosomal protein uL24 family. As to quaternary structure, part of the 50S ribosomal subunit.

Functionally, one of two assembly initiator proteins, it binds directly to the 5'-end of the 23S rRNA, where it nucleates assembly of the 50S subunit. One of the proteins that surrounds the polypeptide exit tunnel on the outside of the subunit. In Erythrobacter litoralis (strain HTCC2594), this protein is Large ribosomal subunit protein uL24.